A 393-amino-acid chain; its full sequence is Glutamate 5-kinase (393 aa).

An ATP-binding site is contributed by K17. 3 residues coordinate substrate: S57, D144, and N156. Residue S176–D177 participates in ATP binding. One can recognise a PUA domain in the interval A282–A359. The segment at A374–A393 is disordered. The segment covering R379 to A393 has biased composition (basic and acidic residues).

The protein belongs to the glutamate 5-kinase family.

The protein resides in the cytoplasm. The enzyme catalyses L-glutamate + ATP = L-glutamyl 5-phosphate + ADP. It participates in amino-acid biosynthesis; L-proline biosynthesis; L-glutamate 5-semialdehyde from L-glutamate: step 1/2. In terms of biological role, catalyzes the transfer of a phosphate group to glutamate to form L-glutamate 5-phosphate. This is Glutamate 5-kinase from Sinorhizobium fredii (strain NBRC 101917 / NGR234).